We begin with the raw amino-acid sequence, 847 residues long: DNA mismatch repair protein MutS (847 aa).

Gly-602–Ser-609 lines the ATP pocket. A disordered region spans residues Glu-788–Gln-807. A compositionally biased stretch (polar residues) spans Ala-796–Gln-807.

The protein belongs to the DNA mismatch repair MutS family.

In terms of biological role, this protein is involved in the repair of mismatches in DNA. It is possible that it carries out the mismatch recognition step. This protein has a weak ATPase activity. The chain is DNA mismatch repair protein MutS from Streptococcus gordonii (strain Challis / ATCC 35105 / BCRC 15272 / CH1 / DL1 / V288).